A 286-amino-acid chain; its full sequence is MAAPAPGAGAASGGAGCSGGGAGAGAGSGSGAAGAGGRLPSRVLELVFSYLELSELRSCALVCKHWYRCLHGDENSEVWRSLCARSLAEEALRTDILCNLPSYKAKIRAFQHAFSTNDCSRNVYIKKNGFTLHRNPIAQSTDGARTKIGFSEGRHAWEVWWEGPLGTVAVIGIATKRAPMQCQGYVALLGSDDQSWGWNLVDNNLLHNGEVNGSFPQCNNAPKYQIGERIRVILDMEDKTLAFERGYEFLGVAFRGLPKVCLYPAVSAVYGNTEVTLVYLGKPLDG.

A2 carries the N-acetylalanine modification. The F-box domain maps to 33-82 (AGAGGRLPSRVLELVFSYLELSELRSCALVCKHWYRCLHGDENSEVWRSL). One can recognise a B30.2/SPRY domain in the interval 92–284 (LRTDILCNLP…VTLVYLGKPL (193 aa)).

The protein belongs to the FBXO45/Fsn family. Forms a complex with MYCBP2 and SKP1. Interacts with HEY1; leading to FBXO45 nuclear translocation. Interacts (via SPRY domain) with CDH2.

It localises to the secreted. It is found in the postsynaptic cell membrane. The protein localises to the presynaptic cell membrane. The protein resides in the nucleus. It functions in the pathway protein modification; protein ubiquitination. Functionally, component of E3 ubiquitin ligase complex consisting of FBXO45, MYCBP2 and SKP1. Functions in substrate recognition but also plays an important role in assembly of the complex. Required for normal neuromuscular synaptogenesis, axon pathfinding and neuronal migration. Regulates neuron migration during brain development through interaction with N-cadherin/CDH2 after secretion via a non-classical mechanism. Plays a role in the regulation of neurotransmission at mature neurons. May control synaptic activity by controlling UNC13A via ubiquitin dependent pathway. Specifically recognizes TP73, promoting its ubiquitination and degradation. Polyubiquitinates NMNAT2, an adenylyltransferase that acts as an axon maintenance factor, and regulates its stability and degradation by the proteasome. Also acts by ubiquitinating FBXW7 during prolonged mitotic arrest and promotes FBXW7 proteasomal degradation. Induces subsequently an increase in mitotic slippage and prevents mitotic cell death. In response to influenza infection, mediates interferon-lambda receptor IFNLR1 polyubiquitination and degradation through the ubiquitin-proteasome system by docking with its intracellular receptor domain. This Homo sapiens (Human) protein is F-box/SPRY domain-containing protein 1 (FBXO45).